The primary structure comprises 282 residues: Putative phosphoesterase 244L (282 aa).

Residues aspartate 45, asparagine 80, and histidine 203 each coordinate a divalent metal cation.

The protein belongs to the metallophosphoesterase superfamily. IIV-6 244L family.

This chain is Putative phosphoesterase 244L, found in Invertebrate iridescent virus 6 (IIV-6).